Reading from the N-terminus, the 382-residue chain is MSSVTGFYIPPISFFGEGALEETADYIKNKDYKKALIVTDPGIAAIGLSGRVQKMLEERDLNVAIYDKTQPNPNIANVTAGLKVLKEQNSEIVVSIGGGSAHDNAKAIALLATNGGEIGDYEGVNQSKKAALPLFAINTTAGTASEMTRFTIISNEEKKIKMAIIDNNVTPAVAVNDPSTMFGLPPALTAATGLDALTHCIEAYVSTASNPITDACALKGIDLINESLVAAYKDGKDKKARTDMCYAEYLAGMAFNNASLGYVHALAHQLGGFYHLPHGVCNAVLLPHVQEANMQCPKAKKRLGEIALHFGASQEDPEETIKALHVLNRTMNIPRNLKELGVKTEDFEILAEHAMHDACHLTNPVQFTKEQVVAIIKKAYEY.

D40, N72, G99, S100, T139, T140, T148, F150, K161, and G183 together coordinate NAD(+). Positions 195, 199, and 264 each coordinate Fe(2+). Residues H268 and H278 each contribute to the NAD(+) site. H278 serves as a coordination point for Fe(2+).

Belongs to the iron-containing alcohol dehydrogenase family. In terms of assembly, homodimer. Zn(2+) serves as cofactor. The cofactor is Fe(2+).

The protein localises to the mitochondrion. It carries out the reaction a primary alcohol + NAD(+) = an aldehyde + NADH + H(+). The enzyme catalyses ethanol + NAD(+) = acetaldehyde + NADH + H(+). With respect to regulation, inhibited by EDTA. In terms of biological role, alcohol dehydrogenase specific for ethanol. Acts mainyl as a mitochondrial formaldehyde dehydrogenase and has no effect on ethanol production. Shows drastically reduced activity towards primary alcohols from 4 carbon atoms upward. Isomers of aliphatic alcohol, as well as secondary alcohols and glycerol are not used at all. The role of ADH4 in yeast metabolism is not yet known, but ADH4 is not responsible for the production of ethanol during growth on glucose nor responsible for the oxidation of ethanol to acetaldehyde. The sequence is that of Alcohol dehydrogenase 4 from Saccharomyces cerevisiae (strain ATCC 204508 / S288c) (Baker's yeast).